A 211-amino-acid polypeptide reads, in one-letter code: Small ribosomal subunit protein uS3 (211 aa).

The KH type-2 domain occupies 38-106 (LRSFVKKTFH…DVELHIVEVK (69 aa)).

Belongs to the universal ribosomal protein uS3 family. In terms of assembly, part of the 30S ribosomal subunit. Forms a tight complex with proteins S10 and S14.

Functionally, binds the lower part of the 30S subunit head. Binds mRNA in the 70S ribosome, positioning it for translation. The protein is Small ribosomal subunit protein uS3 of Anaplasma marginale (strain Florida).